Here is a 228-residue protein sequence, read N- to C-terminus: L-ribulose-5-phosphate 4-epimerase UlaF (228 aa).

Substrate-binding positions include 26–27, 43–44, and 72–73; these read GN, SG, and SS. 3 residues coordinate Zn(2+): Asp74, His93, and His95. Residue Asp118 is the Proton donor/acceptor of the active site. A Zn(2+)-binding site is contributed by His167. The Proton donor/acceptor role is filled by Tyr225.

The protein belongs to the aldolase class II family. AraD/FucA subfamily. Zn(2+) is required as a cofactor.

The catalysed reaction is L-ribulose 5-phosphate = D-xylulose 5-phosphate. Its pathway is cofactor degradation; L-ascorbate degradation; D-xylulose 5-phosphate from L-ascorbate: step 4/4. Catalyzes the isomerization of L-ribulose 5-phosphate to D-xylulose 5-phosphate. Is involved in the anaerobic L-ascorbate utilization. This Shigella dysenteriae serotype 1 (strain Sd197) protein is L-ribulose-5-phosphate 4-epimerase UlaF.